Here is a 178-residue protein sequence, read N- to C-terminus: Protein GrpE (178 aa).

It belongs to the GrpE family. In terms of assembly, homodimer.

It localises to the cytoplasm. Functionally, participates actively in the response to hyperosmotic and heat shock by preventing the aggregation of stress-denatured proteins, in association with DnaK and GrpE. It is the nucleotide exchange factor for DnaK and may function as a thermosensor. Unfolded proteins bind initially to DnaJ; upon interaction with the DnaJ-bound protein, DnaK hydrolyzes its bound ATP, resulting in the formation of a stable complex. GrpE releases ADP from DnaK; ATP binding to DnaK triggers the release of the substrate protein, thus completing the reaction cycle. Several rounds of ATP-dependent interactions between DnaJ, DnaK and GrpE are required for fully efficient folding. This is Protein GrpE from Bordetella avium (strain 197N).